A 1283-amino-acid polypeptide reads, in one-letter code: uncharacterized protein (1283 aa).

The 37-residue stretch at 10–46 (ACPPNTFTCADGSCIPSDWKGDGEKDCEDGSDEEAVT) folds into the LDL-receptor class A domain. 2 disulfide bridges follow: C11–C23 and C18–C36. Positions 27 to 47 (DWKGDGEKDCEDGSDEEAVTG) are disordered. Over residues 34-45 (KDCEDGSDEEAV) the composition is skewed to acidic residues. N79 carries an N-linked (GlcNAc...) asparagine glycan. Positions 236-278 (STTLIVDETTESTSASAEDDDDDVLTTNTSEESTATTAHDEEV) are disordered. Positions 261 to 272 (TTNTSEESTATT) are enriched in low complexity. Positions 332 to 389 (YQKTLEKEKCAIRNATSKCEALISYNNNLDCAIVTMNDECEVDAQNLVVELQEEVNDL) form a coiled coil. Disordered regions lie at residues 621–651 (ARPT…VASS) and 1005–1046 (SSST…PTDG). Residues 626–647 (VTMPPRAPTAKPLPIPSAPTPP) show a composition bias toward pro residues. A compositionally biased stretch (low complexity) spans 1005–1015 (SSSTMVSTSSE). The span at 1016–1026 (SDSESAPEQET) shows a compositional bias: acidic residues. Residues 1027 to 1044 (EPTVPSTTETTESPSTPT) are compositionally biased toward low complexity. Residues 1263-1283 (VQSSVSFHIILAALIPFFALF) form a helical membrane-spanning segment.

It is found in the membrane. This is an uncharacterized protein from Caenorhabditis elegans.